The following is a 292-amino-acid chain: 4-hydroxy-tetrahydrodipicolinate synthase (292 aa).

A pyruvate-binding site is contributed by T45. Y133 (proton donor/acceptor) is an active-site residue. The active-site Schiff-base intermediate with substrate is K161. I203 contributes to the pyruvate binding site.

It belongs to the DapA family. In terms of assembly, homotetramer; dimer of dimers.

It localises to the cytoplasm. The catalysed reaction is L-aspartate 4-semialdehyde + pyruvate = (2S,4S)-4-hydroxy-2,3,4,5-tetrahydrodipicolinate + H2O + H(+). The protein operates within amino-acid biosynthesis; L-lysine biosynthesis via DAP pathway; (S)-tetrahydrodipicolinate from L-aspartate: step 3/4. Catalyzes the condensation of (S)-aspartate-beta-semialdehyde [(S)-ASA] and pyruvate to 4-hydroxy-tetrahydrodipicolinate (HTPA). The protein is 4-hydroxy-tetrahydrodipicolinate synthase of Aromatoleum aromaticum (strain DSM 19018 / LMG 30748 / EbN1) (Azoarcus sp. (strain EbN1)).